The sequence spans 653 residues: Protein fem-1 homolog A (653 aa).

ANK repeat units follow at residues 2 to 31 (DLHT…REEL), 40 to 70 (SGGT…SVEA), 82 to 111 (EGAP…SVNR), 115 to 145 (TNST…DLEV), 149 to 178 (HGHT…QVNR), 182 to 211 (KGNT…RMER), and 214 to 243 (YGMT…AGDE). A Phosphoserine modification is found at Ser108. The segment at 242–274 (DEQAQPGLARVQPQGARSSPEEPPSGESYESCC) is disordered. TPR repeat units follow at residues 282–316 (VEAL…RHQG) and 374–407 (SYYI…QQNN). 2 ANK repeats span residues 518 to 560 (NGFT…DPDS) and 564 to 593 (DNNT…HMDA).

Belongs to the fem-1 family. In terms of assembly, component of a CRL2 E3 ubiquitin-protein ligase complex, also named ECS (Elongin BC-CUL2/5-SOCS-box protein) complex, composed of CUL2, Elongin BC (ELOB and ELOC), RBX1 and substrate-specific adapter FEM1A. Interacts with PTGER4. Interacts with NFKB1; the interaction is direct. Post-translationally, phosphorylated; highly phosphorylated in myoblasts and myotubes. Phosphorylation at Ser-108 promotes PGE2-EP4-mediated inhibition of inflammation. Dephosphorylated by protein phosphatase 2A (PP2A).

The protein localises to the mitochondrion. Its subcellular location is the cytoplasm. The protein operates within protein modification; protein ubiquitination. Substrate-recognition component of a Cul2-RING (CRL2) E3 ubiquitin-protein ligase complex of the DesCEND (destruction via C-end degrons) pathway, which recognizes a C-degron located at the extreme C terminus of target proteins, leading to their ubiquitination and degradation. The C-degron recognized by the DesCEND pathway is usually a motif of less than ten residues and can be present in full-length proteins, truncated proteins or proteolytically cleaved forms. The CRL2(FEM1A) complex specifically recognizes proteins with an arginine at the C-terminus: recognizes and binds proteins ending with -Lys/Arg-Xaa-Arg and -Lys/Arg-Xaa-Xaa-Arg C-degrons, such as SIL1 or OR51B2, leading to their ubiquitination and degradation. Involved in PGE2-EP4-mediated inhibition of inflammation of macrophages via interaction with NFKB1 and PTGER4. Promotes inflammation in brain microglia through MAP2K4/MKK4-mediated signaling. The sequence is that of Protein fem-1 homolog A from Bos taurus (Bovine).